The following is a 331-amino-acid chain: Aldo-keto reductase YhdN (331 aa).

Residues 20–21 (TW) and Asp-52 each bind NADP(+). Residue Tyr-57 is the Proton donor of the active site. Residues Gln-175, 203 to 208 (YGSLCR), Lys-214, Arg-227, 280 to 282 (GAR), and Gln-286 contribute to the NADP(+) site.

Belongs to the aldo/keto reductase family. Aldo/keto reductase 11 subfamily. As to quaternary structure, monomer.

Functionally, aldo-keto reductase (AKR) that displays broad substrate specificity in vitro. Is able to reduce the standard AKR substrates DL-glyceraldehyde, D-erythrose, methylglyoxal, p-nitrobenzaldehyde, benzaldehyde and butyraldehyde, in the presence of NADPH. Cannot use NADH as a cosubstrate. Does not act on glucose, 2-pyridine carboxyaldehyde, fructose and xylose. The physiological function of this enzyme is not clear. May play a role in bacterial stress response and/or in detoxification of reactive aldehydes. This is Aldo-keto reductase YhdN (yhdN) from Bacillus subtilis (strain 168).